The chain runs to 693 residues: Histone-lysine N-methyltransferase, H3 lysine-9 specific SUVH7 (693 aa).

2 disordered regions span residues 64–99 (WYDG…PPEM) and 111–175 (DSSN…AETE). The segment at residues 129-141 (KRGRGRPKGSKNS) is a DNA-binding region (a.T hook). One can recognise a YDG domain in the interval 227-373 (GAVPGIHVGD…FKEFRFKLVR (147 aa)). The Pre-SET domain maps to 454 to 516 (QSLGCQNCRH…HCPTRLVQTG (63 aa)). C458, C461, C466, C471, C473, C498, C502, C504, and C508 together coordinate Zn(2+). One can recognise an SET domain in the interval 519-660 (LHLEVFKTRN…PMTELTYDYG (142 aa)). S-adenosyl-L-methionine-binding positions include 529–531 (CGW), D562, Y564, R614, and 617–618 (NH). 4 residues coordinate Zn(2+): C620, C681, C683, and C688. Residues 677-693 (GKKTCLCGSVKCRGSFT) enclose the Post-SET domain.

This sequence belongs to the class V-like SAM-binding methyltransferase superfamily. Histone-lysine methyltransferase family. Suvar3-9 subfamily.

The protein localises to the nucleus. The protein resides in the chromosome. It is found in the centromere. The catalysed reaction is N(6)-methyl-L-lysyl(9)-[histone H3] + S-adenosyl-L-methionine = N(6),N(6)-dimethyl-L-lysyl(9)-[histone H3] + S-adenosyl-L-homocysteine + H(+). It carries out the reaction L-lysyl(9)-[histone H3] + S-adenosyl-L-methionine = N(6)-methyl-L-lysyl(9)-[histone H3] + S-adenosyl-L-homocysteine + H(+). Histone methyltransferase. Methylates 'Lys-9' of histone H3. H3 'Lys-9' methylation represents a specific tag for epigenetic transcriptional repression. This is Histone-lysine N-methyltransferase, H3 lysine-9 specific SUVH7 (SUVH7) from Arabidopsis thaliana (Mouse-ear cress).